The following is a 1240-amino-acid chain: MPPNSKSKRRKNKSKQHNKKNGNSDPEQSINPTQLVPRMEPELYHTESDYPTSRVIKRAPNGDVIVEPINTDDDKKERTANLTHNKDSMDSASSLAFTLDSHWESLSPEEKKTILRIEKEEVFNVIRNYQDDHSCSCSVCGRRHLAMDQEMERIYNTLYAMDKDKDPETNPIKFHLGIIKELQISKNQQQNDLSSTKGEVVKNFLSSSTVGSLKEEVLHFKQKQLSKQEQAHNETADNTSLLEENLNNIHINKTSSEISANFNSVSDEELQQKYSNFTKTFISSHPKIAEEYVQKMMMYPNIRALTDDLMNSNGQGFLNAIEDFVRDGQIQASKKDDSITEDEASSTDLTDPKEFTTMLHSGKPLTEDEYADLQRNIAERMTNAYDTASKKFKDVSQLEKELFTRFMSGRDKKSFRELIIQSFKNKFDGELGPSVLAATLSSCFSSQSKDTSLDTDSIYEDEDEEDYDDYSEYAEDSEEVSEYEGIEAVEKPEHDEKSNGIRETLHLSYDHDHKRQNHPHHHYHSTSTHSEDELSEEEYISDIELPHDPHKHFHRDDDILDGDEDEPEEEDENEGDDEEDTYDSGLDETDRLEEGRKLIQIAITKLLQSRIMASYHEKQADNNRLKLLQELEEEKRKKREKEEKKQKKREKEKEKKRLQQLAKEEEKRKREEEKERLKKELEEREMRRREAQRKKVEEAKRKKDEERKRRLEEQQRREEMQEKQRKQKEELKRKREEEKKRIREQKRLEQEKLQKEKEEEERQRLIAEDALRKQKLNEEQTSANILSAKPFTENGVGNPVSSQSHPNMTNYQEDNSCSINDEILKMVNSVAASKPVSPTGFNVHDLLLPSTNNQMPAMEQSHLPQPGNQNNHFGTTTIPNALDLATKSSLQTENNYLMNSQTLENTSLLMHNNSSPTKLLPNDFGLSSWGGLTNTMSINPTCKPPVIQTSEMESQAHKSSPQATMPSFGLPNGGTHRKSFTDELNTLTSMLSSSGFADTSLSSSGFPPSQRSVWNDQKSSFSGPSTAGNFNNSSIQSGMLLAPTLGSVESFPNRTSIWDSSTTPMMNKSELSGRNITSTAQDSPAFMASNIWSSNSQYNSPYLTSNVLQSPQISSGVDESHILDSIYNTYLAISPQDSLNPYIAIGTLFQNLVGLNLDYSTFINKLISMQGAYNCEFFTDNNGSITHVRFARQTPAGHSKGLLNQLFSGLNDPTATPFTSRPHTSTRASFPIASSTTQTS.

Over residues 1 to 20 the composition is skewed to basic residues; that stretch reads MPPNSKSKRRKNKSKQHNKK. Positions 1–76 are disordered; that stretch reads MPPNSKSKRR…EPINTDDDKK (76 aa). Positions 25 to 34 are enriched in polar residues; that stretch reads DPEQSINPTQ. A compositionally biased stretch (basic and acidic residues) spans 39–48; it reads MEPELYHTES. Residue Ser266 is modified to Phosphoserine. 5 disordered regions span residues 446–593, 634–744, 951–980, 998–1029, and 1214–1240; these read SQSK…DRLE, EKRK…RIRE, EMES…RKSF, DTSL…TAGN, and TATP…TQTS. Acidic residues predominate over residues 457–487; it reads SIYEDEDEEDYDDYSEYAEDSEEVSEYEGIE. Residues 488–513 are compositionally biased toward basic and acidic residues; it reads AVEKPEHDEKSNGIRETLHLSYDHDH. The segment covering 514 to 524 has biased composition (basic residues); sequence KRQNHPHHHYH. The segment covering 558–587 has biased composition (acidic residues); that stretch reads DILDGDEDEPEEEDENEGDDEEDTYDSGLD. Positions 616 to 777 form a coiled coil; sequence HEKQADNNRL…EDALRKQKLN (162 aa). The segment covering 951 to 965 has biased composition (polar residues); that stretch reads EMESQAHKSSPQATM.

It belongs to the NST1 family. Interacts with MSL1.

Its subcellular location is the cytoplasm. Functionally, with MSL1, acts as a negative regulator of salt tolerance. The polypeptide is Stress response protein NST1 (NST1) (Saccharomyces cerevisiae (strain ATCC 204508 / S288c) (Baker's yeast)).